Reading from the N-terminus, the 180-residue chain is Shikimate kinase (180 aa).

Residue 14–19 participates in ATP binding; the sequence is GAGKST. S18 lines the Mg(2+) pocket. Positions 36, 60, and 82 each coordinate substrate. ATP is bound at residue R120. A substrate-binding site is contributed by R140. Q157 lines the ATP pocket.

The protein belongs to the shikimate kinase family. In terms of assembly, monomer. Mg(2+) is required as a cofactor.

It localises to the cytoplasm. It carries out the reaction shikimate + ATP = 3-phosphoshikimate + ADP + H(+). It functions in the pathway metabolic intermediate biosynthesis; chorismate biosynthesis; chorismate from D-erythrose 4-phosphate and phosphoenolpyruvate: step 5/7. Functionally, catalyzes the specific phosphorylation of the 3-hydroxyl group of shikimic acid using ATP as a cosubstrate. The chain is Shikimate kinase from Haemophilus influenzae (strain PittEE).